Consider the following 205-residue polypeptide: RNA pyrophosphohydrolase (205 aa).

Positions 6–149 constitute a Nudix hydrolase domain; sequence GFRPNVGIVL…KRGVYARALR (144 aa). The Nudix box signature appears at 38–59; the sequence is GGMNTDETPVEAMYRELREETG. The segment at 178–205 is disordered; sequence GSSAAGHDSPRKRPRKRNGARAMRINND. Basic residues predominate over residues 187–196; it reads PRKRPRKRNG.

It belongs to the Nudix hydrolase family. RppH subfamily. A divalent metal cation serves as cofactor.

Accelerates the degradation of transcripts by removing pyrophosphate from the 5'-end of triphosphorylated RNA, leading to a more labile monophosphorylated state that can stimulate subsequent ribonuclease cleavage. This is RNA pyrophosphohydrolase from Xanthomonas axonopodis pv. citri (strain 306).